Consider the following 145-residue polypeptide: Basic phospholipase A2 beta-bungarotoxin A-AL1 chain (145 aa).

The N-terminal stretch at 1 to 17 (MLIFLWCGAVCVSLLGA) is a signal peptide. Positions 18-25 (ANIPPHPL) are excised as a propeptide. Intrachain disulfides connect cysteine 52–cysteine 144, cysteine 54–cysteine 70, cysteine 76–cysteine 118, cysteine 86–cysteine 111, and cysteine 104–cysteine 116. Residues tyrosine 53, glycine 55, and glycine 57 each coordinate Ca(2+). Residue histidine 73 is part of the active site. Aspartate 119 is a catalytic residue.

The protein belongs to the phospholipase A2 family. Group I subfamily. G49 sub-subfamily. In terms of assembly, heterodimer; disulfide-linked. The A chains have phospholipase A2 activity and the B chains show homology with the basic protease inhibitors. Ca(2+) is required as a cofactor. In terms of processing, this enzyme lacks one of the seven disulfide bonds found in similar PLA2 proteins. In terms of tissue distribution, expressed by the venom gland.

It localises to the secreted. It carries out the reaction a 1,2-diacyl-sn-glycero-3-phosphocholine + H2O = a 1-acyl-sn-glycero-3-phosphocholine + a fatty acid + H(+). Its function is as follows. Snake venom phospholipase A2 (PLA2) that inhibits neuromuscular transmission by blocking acetylcholine release from the nerve termini. PLA2 catalyzes the calcium-dependent hydrolysis of the 2-acyl groups in 3-sn-phosphoglycerides. The protein is Basic phospholipase A2 beta-bungarotoxin A-AL1 chain of Bungarus multicinctus (Many-banded krait).